Reading from the N-terminus, the 501-residue chain is DNA nucleotidylexotransferase (501 aa).

Residues 11 to 17 (KKRKRPV) carry the Nuclear localization signal motif. Residues 24-121 (QVEVKFKEVT…RPVRVETRHS (98 aa)) enclose the BRCT domain. Residues 249 to 253 (VGPKT) are involved in DNA binding. A 2'-deoxyribonucleoside 5'-triphosphate is bound by residues 324–329 (GFRRGK) and 333–336 (HDVD). Residues Asp334, Asp336, and Asp426 each coordinate Mg(2+). Residue 441–442 (GW) coordinates a 2'-deoxyribonucleoside 5'-triphosphate.

It belongs to the DNA polymerase type-X family. It depends on Mg(2+) as a cofactor.

The protein resides in the nucleus. The catalysed reaction is DNA(n) + a 2'-deoxyribonucleoside 5'-triphosphate = DNA(n+1) + diphosphate. Its function is as follows. Template-independent DNA polymerase which catalyzes the random addition of deoxynucleoside 5'-triphosphate to the 3'-end of a DNA initiator. One of the in vivo functions of this enzyme is the addition of nucleotides at the junction (N region) of rearranged Ig heavy chain and T-cell receptor gene segments during the maturation of B- and T-cells. The chain is DNA nucleotidylexotransferase (dntt) from Oncorhynchus mykiss (Rainbow trout).